Reading from the N-terminus, the 543-residue chain is Alanine aminotransferase 1, mitochondrial (543 aa).

Residues 1-55 constitute a mitochondrion transit peptide; that stretch reads MRRFVIGQAKNLIDQSRRRQLHHHKNLSFVSLIPPFSAPSDSSSRHLSSSSSSDM. A compositionally biased stretch (low complexity) spans 43–63; the sequence is SSRHLSSSSSSDMSASDSSSS. The interval 43–64 is disordered; sequence SSRHLSSSSSSDMSASDSSSSL. Ser56 is modified (N-acetylserine). Residues Tyr173, 209–210, Tyr235, Asn291, Tyr322, and 354–356 contribute to the pyridoxal 5'-phosphate site; these read AS and SFQ. At Lys360 the chain carries N6-(pyridoxal phosphate)lysine. Pyridoxal 5'-phosphate-binding residues include Arg369 and Asn397.

The protein belongs to the class-I pyridoxal-phosphate-dependent aminotransferase family. Alanine aminotransferase subfamily. In terms of assembly, homodimer. Requires pyridoxal 5'-phosphate as cofactor. In terms of processing, the N-terminus is blocked. Mostly expressed in roots and shoots, mostly in vascular tissues, and, to a lower extent, in flowers and leaves.

It is found in the mitochondrion. It catalyses the reaction L-alanine + 2-oxoglutarate = pyruvate + L-glutamate. Its pathway is photosynthesis; C4 acid pathway. It functions in the pathway amino-acid degradation; L-alanine degradation via transaminase pathway; pyruvate from L-alanine: step 1/1. Functionally, is the major alanine aminotransferase in roots that catalyzes the conversion of alanine to pyruvate. Involved in the rapid conversion of alanine to pyruvate during recovery from low-oxygen stress. The sequence is that of Alanine aminotransferase 1, mitochondrial from Arabidopsis thaliana (Mouse-ear cress).